The following is a 375-amino-acid chain: Sulfite efflux pump SSU1 (375 aa).

Over 1–25 (MPSGSGFHNIEEAGEKARKRDDWIA) the chain is Cytoplasmic. Residues 26–46 (ISNFHPGWFSVNMGTGITAIL) form a helical membrane-spanning segment. The Extracellular portion of the chain corresponds to 47–59 (LQNLPYQFPGLHY). Residues 60–80 (IAVVLFILNVIIFFLFLTISI) form a helical membrane-spanning segment. The Cytoplasmic portion of the chain corresponds to 81 to 101 (TRYCLWPDKFKAMLAHPAHSM). Residues 102–122 (LLGTFPMGFATIINCIVFICV) form a helical membrane-spanning segment. At 123–135 (PVWGEWASRFAWG) the chain is on the extracellular side. A helical transmembrane segment spans residues 136–156 (LWWIDAAVSVAICYFVPFMLM). The Cytoplasmic portion of the chain corresponds to 157–167 (TKHTSSLETMT). Residues 168-188 (AAWLLPIVAPVVAAASGGVVA) form a helical membrane-spanning segment. Topologically, residues 189–200 (DSLQNDTHALIT) are extracellular. Asn193 is a glycosylation site (N-linked (GlcNAc...) asparagine). Residues 201-221 (ILVCYAMWGSAVPLAMVILVI) form a helical membrane-spanning segment. The Cytoplasmic portion of the chain corresponds to 222–234 (YFQRLAIHKLVPR). Residues 235–255 (AAIVSALLPIGPLGQGGFGLM) traverse the membrane as a helical segment. Over 256–277 (QLGVVAKRVFPRLDFLAPIAGD) the chain is Extracellular. A helical membrane pass occupies residues 278–298 (IFYVMGAFIAMIMWGFGLIWL). Over 299 to 309 (WFALASFTRGK) the chain is Cytoplasmic. The helical transmembrane segment at 310 to 330 (FYFNIGWWAFTFPLGVFTTAT) threads the bilayer. Over 331-343 (TQMGKEFNSPFFD) the chain is Extracellular. A helical membrane pass occupies residues 344–364 (ILGTFFSIVVTCMWVLVFALT). The Cytoplasmic portion of the chain corresponds to 365–375 (VYKSCTKELFR).

This sequence belongs to the tellurite-resistance/dicarboxylate transporter (TDT) family.

The protein resides in the cell membrane. In terms of biological role, sulphite efflux pump required for the secretion of sulphite as a reducing agent. In the presence of sulphite, cystine in keratin is directly cleaved to cysteine and S-sulphocysteine, and thereby, reduced proteins become accessible to hydrolysis by a variety of secreted endo- and exoproteases. Excretion of sulphite mediated by an efflux pump also represents a detoxification pathway for dermatophytes during infection of the epidermal stratum corneum, hair and nails, which are rich in cysteine. This chain is Sulfite efflux pump SSU1 (SSU1), found in Trichophyton rubrum (Athlete's foot fungus).